Here is a 178-residue protein sequence, read N- to C-terminus: dCTP deaminase, dUMP-forming (178 aa).

DCTP contacts are provided by residues 96–101 (RSSLGR), Asp113, 121–123 (TLE), Gln142, Tyr156, and Gln163. Glu123 (proton donor/acceptor) is an active-site residue.

Belongs to the dCTP deaminase family. Homotrimer.

The catalysed reaction is dCTP + 2 H2O = dUMP + NH4(+) + diphosphate. The protein operates within pyrimidine metabolism; dUMP biosynthesis; dUMP from dCTP: step 1/1. In terms of biological role, bifunctional enzyme that catalyzes both the deamination of dCTP to dUTP and the hydrolysis of dUTP to dUMP without releasing the toxic dUTP intermediate. This is dCTP deaminase, dUMP-forming from Acetivibrio thermocellus (strain ATCC 27405 / DSM 1237 / JCM 9322 / NBRC 103400 / NCIMB 10682 / NRRL B-4536 / VPI 7372) (Clostridium thermocellum).